Consider the following 564-residue polypeptide: R-linalool synthase (564 aa).

Residues Asp-320, Asp-324, Asp-464, Thr-468, and Glu-472 each contribute to the Mg(2+) site. A DDXXD motif motif is present at residues 320 to 324 (DDVYD).

It belongs to the terpene synthase family. It depends on Mg(2+) as a cofactor. Mn(2+) serves as cofactor.

It carries out the reaction (2E)-geranyl diphosphate + H2O = (R)-linalool + diphosphate. Specifically catalyzes production of (R)-(-)-linalool, the main component of lavender essential oil. In Lavandula angustifolia (Lavender), this protein is R-linalool synthase.